Reading from the N-terminus, the 250-residue chain is UPF0014 membrane protein YjkA (250 aa).

Helical transmembrane passes span 3–23 (YLSL…SKSF), 32–52 (IIAT…LSLI), 57–77 (HPVF…QNVI), 91–111 (FAAL…LHII), 117–137 (YVIP…SLFL), and 214–234 (LLIV…LSVL).

Belongs to the UPF0014 family.

It is found in the cell membrane. This Bacillus subtilis (strain 168) protein is UPF0014 membrane protein YjkA (yjkA).